Here is a 400-residue protein sequence, read N- to C-terminus: Argininosuccinate synthase (400 aa).

Alanine 8–serine 16 contributes to the ATP binding site. Position 87 (tyrosine 87) interacts with L-citrulline. ATP is bound at residue glycine 117. 3 residues coordinate L-aspartate: threonine 119, asparagine 123, and aspartate 124. Asparagine 123 serves as a coordination point for L-citrulline. Residues arginine 127, serine 175, glutamate 260, and tyrosine 272 each contribute to the L-citrulline site.

It belongs to the argininosuccinate synthase family. Type 1 subfamily. In terms of assembly, homotetramer.

It is found in the cytoplasm. The catalysed reaction is L-citrulline + L-aspartate + ATP = 2-(N(omega)-L-arginino)succinate + AMP + diphosphate + H(+). The protein operates within amino-acid biosynthesis; L-arginine biosynthesis; L-arginine from L-ornithine and carbamoyl phosphate: step 2/3. The sequence is that of Argininosuccinate synthase from Nocardia farcinica (strain IFM 10152).